The primary structure comprises 223 residues: MKQEKTPSAITENKLPFSSSNCGCGCHNDDDTLTHDDGLLTDNLESAVYTMLQNVGEDPQREGLLKTPERVARSMRFLTKGYHENPEELLQKALFTESYDEMVLVRDIDLFSMCEHHMLPFFGKAHVAYIPDGKIVGLSKLARVVEVFSRRLQVQERLTQQIRDAIQNVLNPKGVAVVIEAKHLCMVMRGVEKLNSITTTSAMSGVFMTSPSTRGEFLRLIQK.

3 residues coordinate Zn(2+): Cys114, His117, and Cys185.

It belongs to the GTP cyclohydrolase I family. In terms of assembly, homomer.

It catalyses the reaction GTP + H2O = 7,8-dihydroneopterin 3'-triphosphate + formate + H(+). It participates in cofactor biosynthesis; 7,8-dihydroneopterin triphosphate biosynthesis; 7,8-dihydroneopterin triphosphate from GTP: step 1/1. The sequence is that of GTP cyclohydrolase 1 from Chlorobium chlorochromatii (strain CaD3).